A 174-amino-acid polypeptide reads, in one-letter code: Large ribosomal subunit protein uL10 (174 aa).

It belongs to the universal ribosomal protein uL10 family. Part of the ribosomal stalk of the 50S ribosomal subunit. The N-terminus interacts with L11 and the large rRNA to form the base of the stalk. The C-terminus forms an elongated spine to which L12 dimers bind in a sequential fashion forming a multimeric L10(L12)X complex.

In terms of biological role, forms part of the ribosomal stalk, playing a central role in the interaction of the ribosome with GTP-bound translation factors. The chain is Large ribosomal subunit protein uL10 from Methylibium petroleiphilum (strain ATCC BAA-1232 / LMG 22953 / PM1).